The sequence spans 1414 residues: Protein KATNIP homolog (1414 aa).

Disordered stretches follow at residues 1-32, 80-116, 139-158, 712-731, 756-783, 823-861, and 924-943; these read MHGKSLGSSRKNDSRSKIRQEKESNIDFDEKH, QQSTQDLARESSKSSKIPDDGCSHLPGRRSQTAPGKI, GPNTKYSEDFESDDDMNEDQ, VSATSSKEPPPCPRDDNDLT, SSSSNFQQKSHNQPTKNHLNASSSTFTN, KMDNEDDLENFSNQSSYNSDRPVSGRRKTVQMQDKSEKY, and QQQKAGKQSDSTKNGSSLMP. Composition is skewed to basic and acidic residues over residues 10–32 and 86–101; these read RKNDSRSKIRQEKESNIDFDEKH and LARESSKSSKIPDDGC. Residues 147–158 show a composition bias toward acidic residues; sequence DFESDDDMNEDQ. 2 stretches are compositionally biased toward polar residues: residues 832–843 and 924–940; these read NFSNQSSYNSDR and QQQKAGKQSDSTKNGSS.

The protein localises to the cytoplasm. The protein resides in the cytoskeleton. It localises to the cilium axoneme. Its subcellular location is the cilium basal body. May control cilium integrity. This Xenopus laevis (African clawed frog) protein is Protein KATNIP homolog.